The primary structure comprises 137 residues: Large ribosomal subunit protein uL16 (137 aa).

Residues 1–17 show a composition bias toward basic residues; sequence MLQPKRTKFRKQQKGRN. The interval 1 to 21 is disordered; that stretch reads MLQPKRTKFRKQQKGRNRGQA.

This sequence belongs to the universal ribosomal protein uL16 family. Part of the 50S ribosomal subunit.

Functionally, binds 23S rRNA and is also seen to make contacts with the A and possibly P site tRNAs. The chain is Large ribosomal subunit protein uL16 from Nitrosococcus oceani (strain ATCC 19707 / BCRC 17464 / JCM 30415 / NCIMB 11848 / C-107).